Consider the following 315-residue polypeptide: Porphobilinogen deaminase (315 aa).

S-(dipyrrolylmethanemethyl)cysteine is present on C234.

It belongs to the HMBS family. As to quaternary structure, monomer. The cofactor is dipyrromethane.

The catalysed reaction is 4 porphobilinogen + H2O = hydroxymethylbilane + 4 NH4(+). It functions in the pathway porphyrin-containing compound metabolism; protoporphyrin-IX biosynthesis; coproporphyrinogen-III from 5-aminolevulinate: step 2/4. Its function is as follows. Tetrapolymerization of the monopyrrole PBG into the hydroxymethylbilane pre-uroporphyrinogen in several discrete steps. This Mycobacterium avium (strain 104) protein is Porphobilinogen deaminase.